A 190-amino-acid polypeptide reads, in one-letter code: Threonylcarbamoyl-AMP synthase (190 aa).

The YrdC-like domain maps to 7 to 190; that stretch reads GDAIAAAIDV…ALTGELFRQG (184 aa).

It belongs to the SUA5 family. TsaC subfamily.

Its subcellular location is the cytoplasm. The catalysed reaction is L-threonine + hydrogencarbonate + ATP = L-threonylcarbamoyladenylate + diphosphate + H2O. Its function is as follows. Required for the formation of a threonylcarbamoyl group on adenosine at position 37 (t(6)A37) in tRNAs that read codons beginning with adenine. Catalyzes the conversion of L-threonine, HCO(3)(-)/CO(2) and ATP to give threonylcarbamoyl-AMP (TC-AMP) as the acyladenylate intermediate, with the release of diphosphate. In Shigella flexneri, this protein is Threonylcarbamoyl-AMP synthase.